We begin with the raw amino-acid sequence, 385 residues long: Isocitrate dehydrogenase [NAD] subunit beta, mitochondrial (385 aa).

Residues 1–34 (MAALSGVRWLTRALVSAGNPGAWRGLSTSAAAHA) constitute a mitochondrion transit peptide. An N6-acetyllysine modification is found at K199.

The protein belongs to the isocitrate and isopropylmalate dehydrogenases family. Heterooligomer of subunits alpha (IDH3A), beta (IDH3B), and gamma (IDH3G) in the apparent ratio of 2:1:1. The heterodimer containing one IDH3A and one IDH3B subunit and the heterodimer containing one IDH3A and one IDH3G subunit assemble into a heterotetramer (which contains two subunits of IDH3A, one of IDH3B and one of IDH3G) and further into the heterooctamer.

It is found in the mitochondrion. The heterotetramer and the heterodimer composed of IDH3A and IDH3G subunits can be allosterically activated by citrate (CIT) or/and ADP, and the two activators can act independently or synergistically. The heterodimer composed of IDH3A and IDH3B subunits cannot be allosterically regulated and the allosteric regulation of the heterotetramer is through the IDH3G subunit and not the IDH3B subunit. The IDH3G subunit contains the allosteric site which consists of a CIT-binding site and an ADP-binding site, and the binding of CIT and ADP causes conformational changes at the allosteric site which are transmitted to the active site in the catalytic subunit (IDH3A) through a cascade of conformational changes at the heterodimer interface, leading to stabilization of the isocitrate-binding at the active site and thus activation of the enzyme. ATP can activate the heterotetramer and the heterodimer composed of IDH3A and IDH3G subunits at low concentrations but inhibits their activities at high concentrations, whereas ATP exhibits only inhibitory effect on the heterodimer composed of IDH3A and IDH3B subunits. In terms of biological role, plays a structural role to facilitate the assembly and ensure the full activity of the enzyme catalyzing the decarboxylation of isocitrate (ICT) into alpha-ketoglutarate. The heterodimer composed of the alpha (IDH3A) and beta (IDH3B) subunits and the heterodimer composed of the alpha (IDH3A) and gamma (IDH3G) subunits, have considerable basal activity but the full activity of the heterotetramer (containing two subunits of IDH3A, one of IDH3B and one of IDH3G) requires the assembly and cooperative function of both heterodimers. This chain is Isocitrate dehydrogenase [NAD] subunit beta, mitochondrial (IDH3B), found in Macaca fascicularis (Crab-eating macaque).